A 157-amino-acid chain; its full sequence is Transcriptional repressor NrdR (157 aa).

A zinc finger lies at 3–34 (CPFCGHMESQVKDSRPSEDGAAIRRRRLCPEC). The region spanning 49–139 (LTIVKRSGRR…VYRDFRETSD (91 aa)) is the ATP-cone domain.

Belongs to the NrdR family. The cofactor is Zn(2+).

In terms of biological role, negatively regulates transcription of bacterial ribonucleotide reductase nrd genes and operons by binding to NrdR-boxes. The protein is Transcriptional repressor NrdR of Caulobacter sp. (strain K31).